We begin with the raw amino-acid sequence, 892 residues long: Translation initiation factor IF-2 (892 aa).

The segment at Lys88 to Gln306 is disordered. Composition is skewed to basic and acidic residues over residues Val93 to Val159 and Asp166 to Lys216. Residues Gly254 to Lys269 are compositionally biased toward basic residues. The span at His270–Ala282 shows a compositional bias: basic and acidic residues. The tr-type G domain occupies Pro391–Lys560. A G1 region spans residues Gly400 to Thr407. Residue Gly400–Thr407 coordinates GTP. Residues Gly425–His429 form a G2 region. The segment at Asp446–Gly449 is G3. Residues Asp446–His450 and Asn500–Asp503 each bind GTP. Residues Asn500 to Asp503 form a G4 region. The segment at Ser536 to Lys538 is G5.

This sequence belongs to the TRAFAC class translation factor GTPase superfamily. Classic translation factor GTPase family. IF-2 subfamily.

The protein resides in the cytoplasm. Functionally, one of the essential components for the initiation of protein synthesis. Protects formylmethionyl-tRNA from spontaneous hydrolysis and promotes its binding to the 30S ribosomal subunits. Also involved in the hydrolysis of GTP during the formation of the 70S ribosomal complex. The sequence is that of Translation initiation factor IF-2 from Salmonella schwarzengrund (strain CVM19633).